Here is a 431-residue protein sequence, read N- to C-terminus: 3-deoxy-D-manno-octulosonic acid transferase (431 aa).

Residues 5–27 traverse the membrane as a helical; Signal-anchor segment; the sequence is WLTSRLYDAFLVCAFFVSAPRIF. The active-site Proton acceptor is glutamate 67. Residues 275–276, 315–317, and 342–345 contribute to the CMP site; these read PR, MGV, and NLLE.

It belongs to the glycosyltransferase group 1 family. Glycosyltransferase 30 subfamily.

It localises to the cell inner membrane. The enzyme catalyses lipid IVA (E. coli) + CMP-3-deoxy-beta-D-manno-octulosonate = alpha-Kdo-(2-&gt;6)-lipid IVA (E. coli) + CMP + H(+). The catalysed reaction is alpha-Kdo-(2-&gt;6)-lipid IVA (E. coli) + CMP-3-deoxy-beta-D-manno-octulosonate = alpha-Kdo-(2-&gt;4)-alpha-Kdo-(2-&gt;6)-lipid IVA (E. coli) + CMP + H(+). It catalyses the reaction alpha-Kdo-(2-&gt;4)-alpha-Kdo-(2-&gt;6)-lipid IVA (E. coli) + CMP-3-deoxy-beta-D-manno-octulosonate = alpha-Kdo-(2-&gt;8)-alpha-Kdo-(2-&gt;4)-alpha-Kdo-(2-&gt;6)-lipid IVA (E. coli) + CMP + H(+). It participates in bacterial outer membrane biogenesis; LPS core biosynthesis. Functionally, involved in lipopolysaccharide (LPS) biosynthesis. Catalyzes the transfer of three 3-deoxy-D-manno-octulosonate (Kdo) residues from CMP-Kdo to lipid IV(A), the tetraacyldisaccharide-1,4'-bisphosphate precursor of lipid A. Thus generates the genus-specific LPS epitope of Chlamydia, composed of the trisaccharide alpha-Kdo-(2-&gt;8)-alpha-Kdo-(2-&gt;4)-alpha-Kdo. The sequence is that of 3-deoxy-D-manno-octulosonic acid transferase (waaA) from Chlamydia trachomatis serovar D (strain ATCC VR-885 / DSM 19411 / UW-3/Cx).